A 141-amino-acid polypeptide reads, in one-letter code: Hemoglobin subunit alpha (141 aa).

In terms of domain architecture, Globin spans 1–141 (VLSAEDKANV…VSTVLTSKYR (141 aa)). Residue serine 3 is modified to Phosphoserine. Lysine 7 and lysine 11 each carry N6-succinyllysine. Position 16 is an N6-acetyllysine; alternate (lysine 16). Lysine 16 is modified (N6-succinyllysine; alternate). Tyrosine 24 is modified (phosphotyrosine). Serine 35 carries the phosphoserine modification. Lysine 40 is modified (N6-succinyllysine). Serine 49 bears the Phosphoserine mark. Residue histidine 58 coordinates O2. Residue histidine 87 participates in heme b binding. Residue serine 102 is modified to Phosphoserine. Threonine 108 carries the phosphothreonine modification. Residues serine 124 and serine 131 each carry the phosphoserine modification. Residues threonine 134 and threonine 137 each carry the phosphothreonine modification. Phosphoserine is present on serine 138.

Belongs to the globin family. Heterotetramer of two alpha chains and two beta chains. Red blood cells.

Involved in oxygen transport from the lung to the various peripheral tissues. The protein is Hemoglobin subunit alpha of Peromyscus crinitus (Canyon mouse).